The following is a 303-amino-acid chain: Aspartate carbamoyltransferase catalytic subunit (303 aa).

2 residues coordinate carbamoyl phosphate: Arg-51 and Thr-52. Lys-80 lines the L-aspartate pocket. Residues Arg-101, His-129, and Gln-132 each coordinate carbamoyl phosphate. Arg-162 and Arg-221 together coordinate L-aspartate. 2 residues coordinate carbamoyl phosphate: Leu-260 and Pro-261.

This sequence belongs to the aspartate/ornithine carbamoyltransferase superfamily. ATCase family. In terms of assembly, heterooligomer of catalytic and regulatory chains.

The enzyme catalyses carbamoyl phosphate + L-aspartate = N-carbamoyl-L-aspartate + phosphate + H(+). It participates in pyrimidine metabolism; UMP biosynthesis via de novo pathway; (S)-dihydroorotate from bicarbonate: step 2/3. In terms of biological role, catalyzes the condensation of carbamoyl phosphate and aspartate to form carbamoyl aspartate and inorganic phosphate, the committed step in the de novo pyrimidine nucleotide biosynthesis pathway. In Saccharolobus solfataricus (strain ATCC 35092 / DSM 1617 / JCM 11322 / P2) (Sulfolobus solfataricus), this protein is Aspartate carbamoyltransferase catalytic subunit.